The chain runs to 619 residues: Threonine--tRNA ligase (619 aa).

The tract at residues 1-143 is editing domain; it reads MQLLLIHSDF…SRSIRIGEGE (143 aa). The interval 201-500 is catalytic; sequence PHVELMRRLE…AANGGLPMLP (300 aa). The Zn(2+) site is built by C293, H345, and H469.

This sequence belongs to the class-II aminoacyl-tRNA synthetase family. Homodimer. Zn(2+) is required as a cofactor.

It is found in the cytoplasm. It catalyses the reaction tRNA(Thr) + L-threonine + ATP = L-threonyl-tRNA(Thr) + AMP + diphosphate + H(+). Its function is as follows. Catalyzes the attachment of threonine to tRNA(Thr) in a two-step reaction: L-threonine is first activated by ATP to form Thr-AMP and then transferred to the acceptor end of tRNA(Thr). Also edits incorrectly charged L-seryl-tRNA(Thr). The polypeptide is Threonine--tRNA ligase (Methanothrix thermoacetophila (strain DSM 6194 / JCM 14653 / NBRC 101360 / PT) (Methanosaeta thermophila)).